The sequence spans 75 residues: Small ribosomal subunit protein bS18 (75 aa).

Belongs to the bacterial ribosomal protein bS18 family. In terms of assembly, part of the 30S ribosomal subunit. Forms a tight heterodimer with protein bS6.

In terms of biological role, binds as a heterodimer with protein bS6 to the central domain of the 16S rRNA, where it helps stabilize the platform of the 30S subunit. The protein is Small ribosomal subunit protein bS18 of Pasteurella multocida (strain Pm70).